The primary structure comprises 89 residues: UPF0367 protein P9515_01381 (89 aa).

The protein belongs to the UPF0367 family.

This is UPF0367 protein P9515_01381 from Prochlorococcus marinus (strain MIT 9515).